We begin with the raw amino-acid sequence, 130 residues long: UPF0225 protein CE1570 (130 aa).

It belongs to the UPF0225 family.

This is UPF0225 protein CE1570 from Corynebacterium efficiens (strain DSM 44549 / YS-314 / AJ 12310 / JCM 11189 / NBRC 100395).